The primary structure comprises 73 residues: Ferredoxin-thioredoxin reductase, variable chain (73 aa).

The interval 43 to 46 is interaction with ferredoxin; the sequence is NGKP.

The protein belongs to the ferredoxin thioredoxin reductase alpha subunit family. As to quaternary structure, heterodimer of subunit A (variable subunit) and subunit B (catalytic subunit). Heterodimeric FTR forms a complex with ferredoxin and thioredoxin.

Its function is as follows. Variable subunit of the ferredoxin-thioredoxin reductase (FTR), which catalyzes the two-electron reduction of thioredoxins by the electrons provided by reduced ferredoxin. The sequence is that of Ferredoxin-thioredoxin reductase, variable chain (ftrV) from Synechococcus sp. (strain ATCC 27144 / PCC 6301 / SAUG 1402/1) (Anacystis nidulans).